Reading from the N-terminus, the 353-residue chain is tRNA N6-adenosine threonylcarbamoyltransferase (353 aa).

2 residues coordinate Fe cation: H111 and H115. Residues 148-152, D181, G194, and N286 each bind substrate; that span reads LVSGG. D314 contacts Fe cation.

The protein belongs to the KAE1 / TsaD family. Fe(2+) is required as a cofactor.

The protein resides in the cytoplasm. It catalyses the reaction L-threonylcarbamoyladenylate + adenosine(37) in tRNA = N(6)-L-threonylcarbamoyladenosine(37) in tRNA + AMP + H(+). In terms of biological role, required for the formation of a threonylcarbamoyl group on adenosine at position 37 (t(6)A37) in tRNAs that read codons beginning with adenine. Is involved in the transfer of the threonylcarbamoyl moiety of threonylcarbamoyl-AMP (TC-AMP) to the N6 group of A37, together with TsaE and TsaB. TsaD likely plays a direct catalytic role in this reaction. This Blochmanniella floridana protein is tRNA N6-adenosine threonylcarbamoyltransferase.